A 547-amino-acid chain; its full sequence is MIQVASKILVTCALPYANGSLHLGHMLEHIQADIWVRYQRIRGKQVYFICADDAHGTPIMLKAKQSGITPEAMINKINQEHQTDLAQFEISYDNYYSTHSDENRELVISIYNTLKENGLIKKRMISQLYDPIHNIFLPDRFVKGYCPRCKLPDQYGDNCEICGATYHPTDLIDPKSTLSGVTPVISKSKHLFFDLPVFSEVLRAWTRSGALQEQVANKMQEWFDMGLQQWDISRDAPYFGFEVPDTPGKYFYVWLDAPIGYIGAFKNLCNKRNDIIFDEFWHLSSKADLYHFIGKDITYFHGIFWPAILEGSKLRKPTNLFVHGYVTINGAKMSKSRGTLIKASTYLAHLDASYLRYYYATKLSSDINDIDLNFNDFVNRVNADIINKVINLAARNASFIQKYFDNKLSATIEDQYLYDYFVTASVSIGEAFNNRETSRAIREIMILADRANVYIHKKEPWVVAKNKYYQQDLHNICSMGINLFRLLMTYLQPVLPNLAIQAEAFLNTKLNWDSMVIPLTNHKISPFKTLLQRITLSQVKAMIDATH.

The 'HIGH' region motif lies at Pro15–His25. Zn(2+) is bound by residues Cys146, Cys149, Cys159, and Cys162. Residues Lys332 to Ser336 carry the 'KMSKS' region motif. Lys335 lines the ATP pocket.

The protein belongs to the class-I aminoacyl-tRNA synthetase family. MetG type 1 subfamily. Monomer. It depends on Zn(2+) as a cofactor.

Its subcellular location is the cytoplasm. The catalysed reaction is tRNA(Met) + L-methionine + ATP = L-methionyl-tRNA(Met) + AMP + diphosphate. Its function is as follows. Is required not only for elongation of protein synthesis but also for the initiation of all mRNA translation through initiator tRNA(fMet) aminoacylation. This chain is Methionine--tRNA ligase, found in Baumannia cicadellinicola subsp. Homalodisca coagulata.